The following is a 404-amino-acid chain: Phospho-N-acetylmuramoyl-pentapeptide-transferase (404 aa).

10 helical membrane-spanning segments follow: residues 30–50 (SAAILSLCISIFLGKRLIIFF), 73–93 (IPTMGGIIIIAATVVPTLLFA), 100–120 (IMLLLISIIWMGLIGFIDDYI), 132–152 (GKFKIVGQVALGVIVGITLIF), 209–229 (YMWIVYVLFMIFIIAAVSNGA), 242–262 (TSAIIGTTLAILAYVSGNVIF), 274–294 (LAELAIFCTAFVGACVGFLWY), 301–321 (IFMGDTGSLAIGSVIAVLAIV), 326–346 (LMIPLLCGIFFIETLSVIIQV), and 381–401 (KIVTRFWIVGIVLAILSLVTL).

Belongs to the glycosyltransferase 4 family. MraY subfamily. Mg(2+) serves as cofactor.

The protein localises to the cell inner membrane. It catalyses the reaction UDP-N-acetyl-alpha-D-muramoyl-L-alanyl-gamma-D-glutamyl-meso-2,6-diaminopimeloyl-D-alanyl-D-alanine + di-trans,octa-cis-undecaprenyl phosphate = di-trans,octa-cis-undecaprenyl diphospho-N-acetyl-alpha-D-muramoyl-L-alanyl-D-glutamyl-meso-2,6-diaminopimeloyl-D-alanyl-D-alanine + UMP. Its pathway is cell wall biogenesis; peptidoglycan biosynthesis. In terms of biological role, catalyzes the initial step of the lipid cycle reactions in the biosynthesis of the cell wall peptidoglycan: transfers peptidoglycan precursor phospho-MurNAc-pentapeptide from UDP-MurNAc-pentapeptide onto the lipid carrier undecaprenyl phosphate, yielding undecaprenyl-pyrophosphoryl-MurNAc-pentapeptide, known as lipid I. In Amoebophilus asiaticus (strain 5a2), this protein is Phospho-N-acetylmuramoyl-pentapeptide-transferase.